Consider the following 764-residue polypeptide: 5-methyltetrahydropteroyltriglutamate--homocysteine methyltransferase (764 aa).

5-methyltetrahydropteroyltri-L-glutamate-binding positions include 16 to 19 (RELK) and Lys-112. Residues 431–433 (IGS) and Glu-484 contribute to the L-homocysteine site. Residues 431 to 433 (IGS) and Glu-484 contribute to the L-methionine site. 5-methyltetrahydropteroyltri-L-glutamate contacts are provided by residues 515 to 516 (RC) and Trp-561. L-homocysteine is bound at residue Asp-599. Position 599 (Asp-599) interacts with L-methionine. Position 605 (Glu-605) interacts with 5-methyltetrahydropteroyltri-L-glutamate. Residues His-641, Cys-643, and Glu-665 each contribute to the Zn(2+) site. Residue His-694 is the Proton donor of the active site. Cys-726 contributes to the Zn(2+) binding site.

The protein belongs to the vitamin-B12 independent methionine synthase family. Zn(2+) serves as cofactor.

The catalysed reaction is 5-methyltetrahydropteroyltri-L-glutamate + L-homocysteine = tetrahydropteroyltri-L-glutamate + L-methionine. It functions in the pathway amino-acid biosynthesis; L-methionine biosynthesis via de novo pathway; L-methionine from L-homocysteine (MetE route): step 1/1. Its function is as follows. Catalyzes the transfer of a methyl group from 5-methyltetrahydrofolate to homocysteine resulting in methionine formation. In Paraburkholderia phytofirmans (strain DSM 17436 / LMG 22146 / PsJN) (Burkholderia phytofirmans), this protein is 5-methyltetrahydropteroyltriglutamate--homocysteine methyltransferase.